The chain runs to 136 residues: NADPH-dependent 7-cyano-7-deazaguanine reductase (136 aa).

The active-site Thioimide intermediate is the Cys-50. Asp-57 acts as the Proton donor in catalysis. Residues 72–74 and 91–92 each bind substrate; these read YEL and HE.

This sequence belongs to the GTP cyclohydrolase I family. QueF type 1 subfamily.

It is found in the cytoplasm. The enzyme catalyses 7-aminomethyl-7-carbaguanine + 2 NADP(+) = 7-cyano-7-deazaguanine + 2 NADPH + 3 H(+). The protein operates within tRNA modification; tRNA-queuosine biosynthesis. Its function is as follows. Catalyzes the NADPH-dependent reduction of 7-cyano-7-deazaguanine (preQ0) to 7-aminomethyl-7-deazaguanine (preQ1). In Prochlorococcus marinus (strain MIT 9215), this protein is NADPH-dependent 7-cyano-7-deazaguanine reductase.